Reading from the N-terminus, the 150-residue chain is Large ribosomal subunit protein bL9 (150 aa).

This sequence belongs to the bacterial ribosomal protein bL9 family.

Its function is as follows. Binds to the 23S rRNA. This Pseudoalteromonas atlantica (strain T6c / ATCC BAA-1087) protein is Large ribosomal subunit protein bL9.